Reading from the N-terminus, the 185-residue chain is Capsid protein (185 aa).

The interval 136 to 185 is disordered; sequence NAPILSTLPETTVVRRRDRGRSPRRRTPSPRRRRSQSPRRRRSQSRESQC. The segment covering 149–178 has biased composition (basic residues); it reads VRRRDRGRSPRRRTPSPRRRRSQSPRRRRS. Phosphoserine; by host is present on residues Ser-157, Ser-164, and Ser-172. A 1; half-length repeat occupies 157 to 163; the sequence is SPRRRTP. The interval 157–179 is 3 X 8 AA repeats of S-P-R-R-R-[PR]-S-Q; sequence SPRRRTPSPRRRRSQSPRRRRSQ. The Bipartite nuclear localization signal motif lies at 160 to 177; that stretch reads RRTPSPRRRRSQSPRRRR. A run of 2 repeats spans residues 164 to 171 and 172 to 179. Residues 179 to 185 are RNA binding; that stretch reads QSRESQC.

This sequence belongs to the orthohepadnavirus core antigen family. In terms of assembly, homodimerizes, then multimerizes. Interacts with cytosol exposed regions of viral L glycoprotein present in the reticulum-to-Golgi compartment. Interacts with human FLNB. Phosphorylated form interacts with host importin alpha; this interaction depends on the exposure of the NLS, which itself depends upon genome maturation and/or phosphorylation of the capsid protein. Interacts with host NUP153. Phosphorylated by host SRPK1, SRPK2, and maybe protein kinase C or GAPDH. Phosphorylation is critical for pregenomic RNA packaging. Protein kinase C phosphorylation is stimulated by HBx protein and may play a role in transport of the viral genome to the nucleus at the late step during the viral replication cycle.

It localises to the virion. It is found in the host cytoplasm. Its function is as follows. Self assembles to form an icosahedral capsid. Most capsids appear to be large particles with an icosahedral symmetry of T=4 and consist of 240 copies of capsid protein, though a fraction forms smaller T=3 particles consisting of 180 capsid proteins. Entering capsids are transported along microtubules to the nucleus. Phosphorylation of the capsid is thought to induce exposure of nuclear localization signal in the C-terminal portion of the capsid protein that allows binding to the nuclear pore complex via the importin (karyopherin-) alpha and beta. Capsids are imported in intact form through the nuclear pore into the nuclear basket, where it probably binds NUP153. Only capsids that contain the mature viral genome can release the viral DNA and capsid protein into the nucleoplasm. Immature capsids get stuck in the basket. Capsids encapsulate the pre-genomic RNA and the P protein. Pre-genomic RNA is reverse-transcribed into DNA while the capsid is still in the cytoplasm. The capsid can then either be directed to the nucleus, providing more genomes for transcription, or bud through the endoplasmic reticulum to provide new virions. This Hepatitis B virus genotype A1 subtype adw (isolate Philippines/pFDW294/1988) (HBV-A) protein is Capsid protein.